The primary structure comprises 614 residues: Major facilitator superfamily domain-containing protein 6-like protein B (614 aa).

Helical transmembrane passes span 41-61 (LGLG…VHLL) and 78-98 (FFIM…AFYP). Positions 177-191 (HQRFTDQFPSSSPLT) are enriched in polar residues. Residues 177–243 (HQRFTDQFPS…PFATHPNVSH (67 aa)) form a disordered region. The segment covering 205–227 (GSGKAQKANSSKSSASNSKQRSS) has biased composition (low complexity). The next 9 helical transmembrane spans lie at 270–290 (IFLI…PLEW), 312–332 (LWIW…FLID), 345–365 (VSFH…LSTL), 393–413 (IVLT…IQNF), 425–445 (ELYM…LYFF), 457–477 (WMVV…SFLW), 480–500 (WSVV…WWAI), 520–540 (LRWL…GFII), and 546–566 (AVLY…FLLV).

It belongs to the major facilitator superfamily. MFSD6 family.

The protein resides in the membrane. This chain is Major facilitator superfamily domain-containing protein 6-like protein B (mfsd6l-b), found in Xenopus laevis (African clawed frog).